The sequence spans 1378 residues: Protein CLASP-1 (1378 aa).

Residues 168–206 (LIPQLCRLTNDPNSEVRDVSTQCLIDLMVYGGKPIVAKI) form an HEAT 1 repeat. Disordered stretches follow at residues 231-254 (RGDL…RNSL), 266-325 (IHPS…TRSS), and 590-725 (MLRD…HQTP). 2 stretches are compositionally biased toward low complexity: residues 269–283 (SAST…RLST) and 610–619 (NQKQQPNQQN). 2 stretches are compositionally biased toward polar residues: residues 620-630 (ISQKFLSQRSA) and 637-648 (IQLSVKPQTTAI). Residues 664-676 (SSTSTSFSAVRSS) are compositionally biased toward low complexity. Over residues 677–690 (GYGQNQSTTPNRAK) the composition is skewed to polar residues. Residues 704 to 721 (TNGNNNNKSSSSSPSTST) show a composition bias toward low complexity. The stretch at 740–767 (ASLTQEQANCLQNAMNTAKDEMSKNNED) forms a coiled coil. A compositionally biased stretch (basic and acidic residues) spans 775–784 (IRKTPPKEVP). The interval 775–823 (IRKTPPKEVPRSYNNSPFKPSNLDSSVHRSYNNNSPFRPSSGSVGSGSN) is disordered. Residues 786-812 (SYNNSPFKPSNLDSSVHRSYNNNSPFR) show a composition bias toward polar residues. One copy of the HEAT 2 repeat lies at 1305–1341 (HLIVNDVAPCFVTAYESMSSTVRKCAVFGLVALVQRV).

Belongs to the CLASP family.

It localises to the cytoplasm. Its subcellular location is the cytoskeleton. In terms of biological role, microtubule plus-end tracking protein that promotes the stabilization of dynamic microtubules. Operates redundantly with cls-2 and cls-3 in regulating microtubule processes which position the spindle during asymmetric cell division. The chain is Protein CLASP-1 (cls-1) from Caenorhabditis elegans.